The primary structure comprises 486 residues: Glutamate--tRNA ligase (486 aa).

The 'HIGH' region signature appears at 11–21 (PSPTGLLHIGN). The 'KMSKS' region signature appears at 255–259 (KLSKR). An ATP-binding site is contributed by lysine 258.

This sequence belongs to the class-I aminoacyl-tRNA synthetase family. Glutamate--tRNA ligase type 1 subfamily. Monomer.

Its subcellular location is the cytoplasm. The enzyme catalyses tRNA(Glu) + L-glutamate + ATP = L-glutamyl-tRNA(Glu) + AMP + diphosphate. Its function is as follows. Catalyzes the attachment of glutamate to tRNA(Glu) in a two-step reaction: glutamate is first activated by ATP to form Glu-AMP and then transferred to the acceptor end of tRNA(Glu). This chain is Glutamate--tRNA ligase, found in Streptococcus pneumoniae serotype 19F (strain G54).